Here is a 390-residue protein sequence, read N- to C-terminus: Chorismate synthase 2 (390 aa).

The NADP(+) site is built by Arg-39 and Arg-45. FMN-binding positions include 132–134 (RSS), 253–254 (NA), Gly-298, 313–317 (KPIPT), and Arg-339.

The protein belongs to the chorismate synthase family. In terms of assembly, homotetramer. FMNH2 is required as a cofactor.

It carries out the reaction 5-O-(1-carboxyvinyl)-3-phosphoshikimate = chorismate + phosphate. The protein operates within metabolic intermediate biosynthesis; chorismate biosynthesis; chorismate from D-erythrose 4-phosphate and phosphoenolpyruvate: step 7/7. Functionally, catalyzes the anti-1,4-elimination of the C-3 phosphate and the C-6 proR hydrogen from 5-enolpyruvylshikimate-3-phosphate (EPSP) to yield chorismate, which is the branch point compound that serves as the starting substrate for the three terminal pathways of aromatic amino acid biosynthesis. This reaction introduces a second double bond into the aromatic ring system. The sequence is that of Chorismate synthase 2 from Bacillus cereus (strain ZK / E33L).